Consider the following 607-residue polypeptide: Terpenoid synthase 29 (607 aa).

The Mg(2+) site is built by Asp358, Asp362, Asn502, Thr506, and Glu510. A DDXXD motif motif is present at residues 358–362 (DDTYD).

Belongs to the terpene synthase family. Tpsa subfamily. Mg(2+) serves as cofactor. It depends on Mn(2+) as a cofactor. In terms of tissue distribution, predominantly expressed in flowers but also in siliques, roots, leaves and stems.

It localises to the cytoplasm. The protein operates within secondary metabolite biosynthesis; terpenoid biosynthesis. This Arabidopsis thaliana (Mouse-ear cress) protein is Terpenoid synthase 29 (TPS29).